The chain runs to 237 residues: UPF0174 protein YaaW (237 aa).

The protein belongs to the UPF0174 family.

The protein is UPF0174 protein YaaW of Escherichia coli O157:H7.